A 186-amino-acid chain; its full sequence is Proline-rich protein 3 (186 aa).

The disordered stretch occupies residues 1–97 (MPKRKKQNQP…LGPRSSPYGR (97 aa)). Composition is skewed to pro residues over residues 33-44 (MGPPSLLGPPPM) and 67-79 (MIPP…PPPR). The segment at 153–181 (KSDRPVCRHFSKKGHCRYEDHCAFYHPGV) adopts a C3H1-type zinc-finger fold.

This chain is Proline-rich protein 3 (Prr3), found in Rattus norvegicus (Rat).